The sequence spans 216 residues: MTDYDFEHLDTSALPVRQRRILEVIRDWVVEHGYAPSTRQIGAAVGLRSMSSVARHLRSLEERGFLRRGEGVARPIDVRLFLHGTAAAAPSEDAVTVPVVGDIAAGAPILAEEHTDDLLTLPRELVGRGTVFALRVRGDSMIDAAICDGDTVVVRSQREANSGDIVAAMIGEEATVKVFRRRNGHVLLEPRNPAYDVIDGDEAVILGKVVSVLRRI.

Residues 38–58 (TRQIGAAVGLRSMSSVARHLR) constitute a DNA-binding region (H-T-H motif). Active-site for autocatalytic cleavage activity residues include S140 and K177.

Belongs to the peptidase S24 family. In terms of assembly, homodimer.

The catalysed reaction is Hydrolysis of Ala-|-Gly bond in repressor LexA.. Functionally, represses a number of genes involved in the response to DNA damage (SOS response), including recA and lexA. In the presence of single-stranded DNA, RecA interacts with LexA causing an autocatalytic cleavage which disrupts the DNA-binding part of LexA, leading to derepression of the SOS regulon and eventually DNA repair. This chain is LexA repressor 1, found in Nocardia farcinica (strain IFM 10152).